The sequence spans 475 residues: Ribulose bisphosphate carboxylase large chain (475 aa).

Residues 1 to 2 constitute a propeptide that is removed on maturation; it reads MS. An N-acetylproline modification is found at Pro-3. Lys-14 is subject to N6,N6,N6-trimethyllysine. Residues Asn-123 and Thr-173 each contribute to the substrate site. Lys-175 functions as the Proton acceptor in the catalytic mechanism. Position 177 (Lys-177) interacts with substrate. Residues Lys-201, Asp-203, and Glu-204 each coordinate Mg(2+). Lys-201 carries the post-translational modification N6-carboxylysine. His-294 acts as the Proton acceptor in catalysis. The substrate site is built by Arg-295, His-327, and Ser-379.

It belongs to the RuBisCO large chain family. Type I subfamily. In terms of assembly, heterohexadecamer of 8 large chains and 8 small chains; disulfide-linked. The disulfide link is formed within the large subunit homodimers. Mg(2+) serves as cofactor. Post-translationally, the disulfide bond which can form in the large chain dimeric partners within the hexadecamer appears to be associated with oxidative stress and protein turnover.

Its subcellular location is the plastid. The protein resides in the chloroplast. It catalyses the reaction 2 (2R)-3-phosphoglycerate + 2 H(+) = D-ribulose 1,5-bisphosphate + CO2 + H2O. It carries out the reaction D-ribulose 1,5-bisphosphate + O2 = 2-phosphoglycolate + (2R)-3-phosphoglycerate + 2 H(+). RuBisCO catalyzes two reactions: the carboxylation of D-ribulose 1,5-bisphosphate, the primary event in carbon dioxide fixation, as well as the oxidative fragmentation of the pentose substrate in the photorespiration process. Both reactions occur simultaneously and in competition at the same active site. The protein is Ribulose bisphosphate carboxylase large chain of Fagopyrum esculentum subsp. ancestrale (Wild buckwheat).